Reading from the N-terminus, the 249-residue chain is ATP-dependent dethiobiotin synthetase BioD (249 aa).

Residue 11-16 (NVGKTI) participates in ATP binding. T15 contributes to the Mg(2+) binding site. K31 is a catalytic residue. Substrate is bound at residue T35. ATP contacts are provided by residues D40, 127-130 (EGAG), 188-189 (NS), and 215-217 (PYL). The Mg(2+) site is built by D40 and E127.

It belongs to the dethiobiotin synthetase family. In terms of assembly, homodimer. The cofactor is Mg(2+).

It is found in the cytoplasm. It catalyses the reaction (7R,8S)-7,8-diammoniononanoate + CO2 + ATP = (4R,5S)-dethiobiotin + ADP + phosphate + 3 H(+). It functions in the pathway cofactor biosynthesis; biotin biosynthesis; biotin from 7,8-diaminononanoate: step 1/2. Functionally, catalyzes a mechanistically unusual reaction, the ATP-dependent insertion of CO2 between the N7 and N8 nitrogen atoms of 7,8-diaminopelargonic acid (DAPA, also called 7,8-diammoniononanoate) to form a ureido ring. This is ATP-dependent dethiobiotin synthetase BioD from Neorickettsia sennetsu (strain ATCC VR-367 / Miyayama) (Ehrlichia sennetsu).